Reading from the N-terminus, the 195-residue chain is Small ribosomal subunit protein uS10c (195 aa).

A chloroplast-targeting transit peptide spans 1 to 59 (MATSSISAALLSPLTLRNASSSSTKQDFSTLSSLNLRRTLTPTLQSGHTLSNSSNFATF).

It belongs to the universal ribosomal protein uS10 family. Component of the chloroplast small ribosomal subunit (SSU). Mature 70S chloroplast ribosomes of higher plants consist of a small (30S) and a large (50S) subunit. The 30S small subunit contains 1 molecule of ribosomal RNA (16S rRNA) and 24 different proteins. The 50S large subunit contains 3 rRNA molecules (23S, 5S and 4.5S rRNA) and 33 different proteins.

The protein resides in the plastid. It is found in the chloroplast. Its function is as follows. Component of the chloroplast ribosome (chloro-ribosome), a dedicated translation machinery responsible for the synthesis of chloroplast genome-encoded proteins, including proteins of the transcription and translation machinery and components of the photosynthetic apparatus. This is Small ribosomal subunit protein uS10c (RPS10) from Spinacia oleracea (Spinach).